We begin with the raw amino-acid sequence, 128 residues long: Probable heavy metal-dependent transcriptional regulator HI_0293 (128 aa).

The region spanning 1-69 (MNISEAAKLV…LHQIAQLLAL (69 aa)) is the HTH merR-type domain. Residues 4–23 (SEAAKLVGLSTKQIRDYEKM) constitute a DNA-binding region (H-T-H motif).

Its subcellular location is the cytoplasm. Its function is as follows. Could be a copper-dependent transcriptional activator of the ATPase HI_0290. This is Probable heavy metal-dependent transcriptional regulator HI_0293 from Haemophilus influenzae (strain ATCC 51907 / DSM 11121 / KW20 / Rd).